A 164-amino-acid chain; its full sequence is Ribosome maturation factor RimM (164 aa).

The region spanning 93-164 (DSEYYVANLN…FVVIVPPEFI (72 aa)) is the PRC barrel domain.

Belongs to the RimM family. Binds ribosomal protein uS19.

The protein resides in the cytoplasm. An accessory protein needed during the final step in the assembly of 30S ribosomal subunit, possibly for assembly of the head region. Essential for efficient processing of 16S rRNA. May be needed both before and after RbfA during the maturation of 16S rRNA. It has affinity for free ribosomal 30S subunits but not for 70S ribosomes. The protein is Ribosome maturation factor RimM of Orientia tsutsugamushi (strain Boryong) (Rickettsia tsutsugamushi).